The following is a 644-amino-acid chain: Sodium/potassium/calcium exchanger 3 (644 aa).

A signal peptide spans 1–44; sequence MRPSGDEDRARRRRRRRRRRDLLLSQLCFLASVALLLWSLSSLR. Topologically, residues 45–107 are extracellular; sequence EQKELDLMDL…DIFTNEDRRQ (63 aa). 2 N-linked (GlcNAc...) asparagine glycosylation sites follow: N71 and N86. The chain crosses the membrane as a helical span at residues 108–128; it reads GAVVLHVLCAIYMFYALAIVC. Residues 129–153 are Cytoplasmic-facing; that stretch reads DDFFVPSLEKICERLHLSEDVAGAT. One copy of the Alpha-1 repeat lies at 149-189; it reads VAGATFMAAGSSAPELFTSVIGVFITKGDVGVGTIVGSAVF. A helical transmembrane segment spans residues 154–174; sequence FMAAGSSAPELFTSVIGVFIT. The Extracellular portion of the chain corresponds to 175 to 182; sequence KGDVGVGT. The chain crosses the membrane as a helical span at residues 183-203; that stretch reads IVGSAVFNILCIIGVCGLFAG. At 204-210 the chain is on the cytoplasmic side; that stretch reads QVVALSS. A helical membrane pass occupies residues 211–231; it reads WCLLRDSIYYTLSVIALIVFI. The Extracellular segment spans residues 232-234; the sequence is YDE. Residues 235–255 form a helical membrane-spanning segment; sequence KVSWWESLVLVLMYLIYIVIM. Residues 256–484 are Cytoplasmic-facing; sequence KYNACIHQCF…WFMVTFASST (229 aa). S308 carries the phosphoserine modification. Positions 405 to 442 are disordered; it reads AEAGNETENENEDNENDEEEEEDEDDDEGPYTPFDTPS. Residues 409-433 are compositionally biased toward acidic residues; the sequence is NETENENEDNENDEEEEEDEDDDEG. Residues 485–505 traverse the membrane as a helical segment; that stretch reads LWIAAFSYMMVWMVTIIGYTL. Residues 506 to 510 lie on the Extracellular side of the membrane; that stretch reads GIPDV. A helical transmembrane segment spans residues 511-531; the sequence is IMGITFLAAGTSVPDCMASLI. Residues 518-549 form an Alpha-2 repeat; sequence AAGTSVPDCMASLIVARQGMGDMAVSNSIGSN. The Cytoplasmic segment spans residues 532 to 549; the sequence is VARQGMGDMAVSNSIGSN. The chain crosses the membrane as a helical span at residues 550–570; it reads VFDILIGLGLPWALQTLAVDY. Topologically, residues 571 to 580 are extracellular; it reads GSYIRLNSRG. Residues 581 to 601 traverse the membrane as a helical segment; that stretch reads LIYSVGLLLASVFVTVFGVHL. Over 602-615 the chain is Cytoplasmic; it reads NKWQLDKKLGCGCL. Residues 616 to 636 traverse the membrane as a helical segment; sequence LLYGVFLCFSIMTEFNVFTFV. Residues 637-644 are Extracellular-facing; the sequence is NLPMCGDH.

The protein belongs to the Ca(2+):cation antiporter (CaCA) (TC 2.A.19) family. SLC24A subfamily. In terms of tissue distribution, abundant in the brain. Expressed at low levels in the aorta, uterus and intestine.

The protein resides in the cell membrane. It carries out the reaction Ca(2+)(out) + K(+)(out) + 4 Na(+)(in) = Ca(2+)(in) + K(+)(in) + 4 Na(+)(out). In terms of biological role, calcium, potassium:sodium antiporter that transports 1 Ca(2+) and 1 K(+) in exchange for 4 Na(+). The protein is Sodium/potassium/calcium exchanger 3 (SLC24A3) of Homo sapiens (Human).